Here is a 99-residue protein sequence, read N- to C-terminus: Small ribosomal subunit protein bS21 (99 aa).

Residues 60–99 (KKLQREGLLPMKPKPVFGAGPGGDRRGPGAGPGAGPRPAR) are disordered.

The protein belongs to the bacterial ribosomal protein bS21 family.

The sequence is that of Small ribosomal subunit protein bS21 from Rhodopseudomonas palustris (strain BisA53).